The following is a 72-amino-acid chain: MAKEDNIEMQGTILETLPNTMFRVELENGHVVIAHISGKMRKNYIRILTGDKVTVQLTPYDLSKGRIVFRSR.

An S1-like domain is found at 1–72; that stretch reads MAKEDNIEMQ…SKGRIVFRSR (72 aa).

It belongs to the IF-1 family. As to quaternary structure, component of the 30S ribosomal translation pre-initiation complex which assembles on the 30S ribosome in the order IF-2 and IF-3, IF-1 and N-formylmethionyl-tRNA(fMet); mRNA recruitment can occur at any time during PIC assembly.

Its subcellular location is the cytoplasm. Its function is as follows. One of the essential components for the initiation of protein synthesis. Stabilizes the binding of IF-2 and IF-3 on the 30S subunit to which N-formylmethionyl-tRNA(fMet) subsequently binds. Helps modulate mRNA selection, yielding the 30S pre-initiation complex (PIC). Upon addition of the 50S ribosomal subunit IF-1, IF-2 and IF-3 are released leaving the mature 70S translation initiation complex. The polypeptide is Translation initiation factor IF-1 (Shewanella loihica (strain ATCC BAA-1088 / PV-4)).